The following is a 319-amino-acid chain: Heavy metal-associated isoprenylated plant protein 9 (319 aa).

Composition is skewed to basic and acidic residues over residues 1–11 (MGEEVKPEAKE) and 24–45 (EEKKKDVAEEKKVAAEEEKPKE). The disordered stretch occupies residues 1 to 57 (MGEEVKPEAKEAASAPQAVPAEEEEKKKDVAEEKKVAAEEEKPKEEEEPQPPPPPPP). Positions 21 to 48 (AEEEEKKKDVAEEKKVAAEEEKPKEEEE) form a coiled coil. 2 consecutive HMA domains span residues 55–118 (PPPF…KRMA) and 144–208 (LTTV…KQAR). A metal cation contacts are provided by Cys66, Cys69, Cys155, and Cys158. The tract at residues 207-282 (ARIVPQPDPE…RDNEMTAMAQ (76 aa)) is disordered. The segment covering 224–254 (QEEKKEESGEGNEKPPETGEEKEEEKKKEGE) has biased composition (basic and acidic residues). A compositionally biased stretch (acidic residues) spans 255–268 (ENGEEGGGEEAAAT). Cys316 bears the Cysteine methyl ester mark. Residue Cys316 is the site of S-farnesyl cysteine attachment. Residues 317–319 (CIS) constitute a propeptide, removed in mature form.

It belongs to the HIPP family.

In terms of biological role, heavy-metal-binding protein. This chain is Heavy metal-associated isoprenylated plant protein 9, found in Arabidopsis thaliana (Mouse-ear cress).